A 293-amino-acid chain; its full sequence is MGKKRSREEAQKEVVQNDPTVDKMDEDSDSSDSDEDMDIINVDFELFNYDKDIDFHGVKTLLRQLFDADAQLFDLSGLSDMIIEQNTIGSTCKVDDKANDAYAFLTVLNAWEHREKKPVAQLIEYLSDKAVKAGDSSLSVLPELFTSGKAQVGIVLSERLINMPAEVIPPMWNMMIEEIQDAVDDKEPYEFTHYLVVSRAYVEVESSLDQEEQKRKRLRDEKGLQYFHPEDEEMRKHAVGAGTYTFTKEGDSADSKRAFQELGVKSQGFMMLIEAGRFKQAVKAIGDCIGAAN.

A compositionally biased stretch (basic and acidic residues) spans 1-12 (MGKKRSREEAQK). The segment at 1–35 (MGKKRSREEAQKEVVQNDPTVDKMDEDSDSSDSDE) is disordered. The span at 24 to 35 (MDEDSDSSDSDE) shows a compositional bias: acidic residues.

The protein belongs to the BCP1 family.

The protein resides in the cytoplasm. The protein localises to the nucleus. Its function is as follows. Involved in nuclear export, actin cytoskeleton organization and vesicular transport. The chain is Protein bcp-1 (bcp-1) from Neurospora crassa (strain ATCC 24698 / 74-OR23-1A / CBS 708.71 / DSM 1257 / FGSC 987).